The following is a 219-amino-acid chain: Thiamine-phosphate synthase (219 aa).

4-amino-2-methyl-5-(diphosphooxymethyl)pyrimidine contacts are provided by residues 48–52 (QFRQK) and Asn84. Asp85 and Asp104 together coordinate Mg(2+). Ser123 serves as a coordination point for 4-amino-2-methyl-5-(diphosphooxymethyl)pyrimidine. 150–152 (TPS) is a binding site for 2-[(2R,5Z)-2-carboxy-4-methylthiazol-5(2H)-ylidene]ethyl phosphate. Lys153 lines the 4-amino-2-methyl-5-(diphosphooxymethyl)pyrimidine pocket. Residues Gly181 and 199-200 (IS) contribute to the 2-[(2R,5Z)-2-carboxy-4-methylthiazol-5(2H)-ylidene]ethyl phosphate site.

This sequence belongs to the thiamine-phosphate synthase family. It depends on Mg(2+) as a cofactor.

It carries out the reaction 2-[(2R,5Z)-2-carboxy-4-methylthiazol-5(2H)-ylidene]ethyl phosphate + 4-amino-2-methyl-5-(diphosphooxymethyl)pyrimidine + 2 H(+) = thiamine phosphate + CO2 + diphosphate. The enzyme catalyses 2-(2-carboxy-4-methylthiazol-5-yl)ethyl phosphate + 4-amino-2-methyl-5-(diphosphooxymethyl)pyrimidine + 2 H(+) = thiamine phosphate + CO2 + diphosphate. It catalyses the reaction 4-methyl-5-(2-phosphooxyethyl)-thiazole + 4-amino-2-methyl-5-(diphosphooxymethyl)pyrimidine + H(+) = thiamine phosphate + diphosphate. It functions in the pathway cofactor biosynthesis; thiamine diphosphate biosynthesis; thiamine phosphate from 4-amino-2-methyl-5-diphosphomethylpyrimidine and 4-methyl-5-(2-phosphoethyl)-thiazole: step 1/1. In terms of biological role, condenses 4-methyl-5-(beta-hydroxyethyl)thiazole monophosphate (THZ-P) and 2-methyl-4-amino-5-hydroxymethyl pyrimidine pyrophosphate (HMP-PP) to form thiamine monophosphate (TMP). The sequence is that of Thiamine-phosphate synthase from Helicobacter pylori (strain HPAG1).